A 163-amino-acid polypeptide reads, in one-letter code: Nucleotide-binding protein KPN78578_03700 (163 aa).

It belongs to the YajQ family.

In terms of biological role, nucleotide-binding protein. The polypeptide is Nucleotide-binding protein KPN78578_03700 (Klebsiella pneumoniae subsp. pneumoniae (strain ATCC 700721 / MGH 78578)).